Here is a 630-residue protein sequence, read N- to C-terminus: A-type voltage-gated potassium channel KCND2 (630 aa).

Residues 1 to 184 lie on the Cytoplasmic side of the membrane; it reads MAAGVAAWLP…FENPHTSTMA (184 aa). The interaction with KCNIP1, KCNIP2, and other family members stretch occupies residues 2–20; it reads AAGVAAWLPFARAAAIGWM. At Thr-38 the chain carries Phosphothreonine. The interval 71–90 is interaction with KCNIP1; that stretch reads ERDFFYHPETQQYFFDRDPD. The Zn(2+) site is built by His-105, Cys-111, Cys-132, and Cys-133. The helical transmembrane segment at 185–206 threads the bilayer; that stretch reads LVFYYVTGFFIAVSVIANVVET. At 207 to 226 the chain is on the extracellular side; it reads VPCGSSPGHIKELPCGERYA. Residues 227 to 249 form a helical membrane-spanning segment; that stretch reads VAFFCLDTACVMIFTVEYLLRLA. Over 250–256 the chain is Cytoplasmic; the sequence is AAPSRYR. The helical transmembrane segment at 257 to 281 threads the bilayer; it reads FVRSVMSIIDVVAILPYYIGLVMTD. Residues 282–287 are Extracellular-facing; the sequence is NEDVSG. The helical; Voltage-sensor transmembrane segment at 288–307 threads the bilayer; sequence AFVTLRVFRVFRIFKFSRHS. Residues 308 to 321 are Cytoplasmic-facing; it reads QGLRILGYTLKSCA. Residues 308-321 form an S4-S5 linker region; it reads QGLRILGYTLKSCA. A helical transmembrane segment spans residues 322–345; sequence SELGFLLFSLTMAIIIFATVMFYA. The Extracellular segment spans residues 346–357; that stretch reads EKGSSASKFTSI. An intramembrane region (helical) is located at residues 358–369; it reads PAAFWYTIVTMT. Positions 370, 371, 372, and 373 each coordinate K(+). A Selectivity filter motif is present at residues 370–375; that stretch reads TLGYGD. The stretch at 370 to 377 is an intramembrane region; sequence TLGYGDMV. Residues 378–380 lie on the Extracellular side of the membrane; sequence PKT. A helical membrane pass occupies residues 381–403; sequence IAGKIFGSICSLSGVLVIALPVP. Residues 404 to 630 lie on the Cytoplasmic side of the membrane; that stretch reads VIVSNFSRIY…GGNIVRVSAL (227 aa). The residue at position 438 (Ser-438) is a Phosphoserine. Residues 474 to 489 form a required for dendritic targeting region; the sequence is FETQHHHLLHCLEKTT. The tract at residues 474–630 is important for normal channel activation and inactivation, for interaction with KCNIP2, and probably other family members as well; it reads FETQHHHLLH…GGNIVRVSAL (157 aa). A phosphoserine mark is found at Ser-548, Ser-552, Ser-572, and Ser-575. The segment at 600-623 is disordered; it reads IPTPPVTTPEGDDRPESPEYSGGN. A phosphothreonine mark is found at Thr-602 and Thr-607. A Phosphoserine modification is found at Ser-616. Positions 627–630 match the PDZ-binding motif; sequence VSAL.

It belongs to the potassium channel family. D (Shal) (TC 1.A.1.2) subfamily. Kv4.2/KCND2 sub-subfamily. In terms of assembly, homotetramer or heterotetramer with KCND1 or KCND3. Associates with the regulatory subunits KCNIP2, KCNIP3 and KCNIP4. Interacts with the regulatory subunit KCNIP1; this interaction mediates the capture of both the N- and C-terminus of KCND2, preventing N-type inactivation and stabilizing the S6 conformation, thereby accelerating closed state inactivation and recovery. Interacts with DPP10, DLG4 and DLG1. In vivo, probably exists as heteromeric complex containing variable proportions of KCND1, KCND2, KCND3, KCNIP1, KCNIP2, KCNIP3, KCNIP4, DPP6 and DPP10. The tetrameric channel can associate with up to four regulatory subunits, such as KCNIP2 or KCNIP4. Interaction with KCNIP3 promotes tetramerization and formation of a functional potassium channel. Interaction with four KCNIP4 chains does not reduce interaction with DPP10. Probably part of a complex consisting of KCNIP1, KCNIP2 isoform 3 and KCND2. Interacts with FLNA and FLNC. Interacts with NCS1/FREQ. Identified in a complex with cAMP-dependent protein kinase (PKA), CAV3, AKAP6 and KCND3 in cardiac myocytes. Interacts (via S1 and S2 helices) with DPP6; this interaction stabilizes the conformation of the S1-S2 helices and facilitates S4 conformational change, including S4 sliding up and down, thereby accelerating activation, inactivation, and recovery. Phosphorylation at Ser-438 in response to MAPK activation is increased in stimulated dendrites. Interaction with KCNIP2 and DPP6 propomtes phosphorylation by PKA at Ser-552. Phosphorylation at Ser-552 has no effect on interaction with KCNIP3, but is required for the regulation of channel activity by KCNIP3. Phosphorylation at Ser-552 leads to KCND2 internalization. Phosphorylated by MAPK in response to signaling via the metabotropic glutamate receptor GRM5. Phosphorylation at Ser-616 is required for the down-regulation of neuronal A-type currents in response to signaling via GRM5. Detected in brain cortex, hippocampus, dentate gyrus, thalamus and cerebellum. Detected in neurons from the primary visual cortex. Detected in the supraoptic nucleus in hypothalamus, in hippocampus and the habenular nucleus of the thalamus. Detected in the bed nucleus of the stria terminalis. Detected in dendritic fields in the hippocampus CA1 layer, in stratum radiatum, stratum oriens, stratum lacunosum-moleculare and stratum pyramidale. Detected in dendritic fields in the hippocampus CA3 layer and in dentate gyrus. Detected in the cerebellum granule cell layer, where it localizes at synapses. Detected in the main olfactory bulb, especially in the granule cell layer and the external plexiform layer, but also the mitral layer. Detected in heart atrium and ventricle. Detected in heart left ventricle (at protein level). Highly expressed in heart and throughout the brain, with similar levels in cortex and hypothalamus, and much higher levels in hippocampus, dentate gyrus and the habenular nucleus of the thalamus. Detected in brain, and at lower levels in heart atrium and ventricle. Detected in neurons from the bed nucleus of the stria terminalis. Detected in aorta, cardiac and smooth muscle.

The protein resides in the cell membrane. Its subcellular location is the cell projection. The protein localises to the dendrite. It localises to the synapse. It is found in the perikaryon. The protein resides in the postsynaptic cell membrane. Its subcellular location is the dendritic spine. The protein localises to the sarcolemma. It localises to the cell junction. It is found in the membrane. The protein resides in the caveola. It catalyses the reaction K(+)(in) = K(+)(out). Its activity is regulated as follows. Inhibited by 5 mM 4-aminopyridine (4-AP). Not inhibited by dendrotoxins and by tetraethylammonium (TEA). Inhibited by 10 mM flecainide and 20 mM quinidine. Inhibited by the heteropodatoxins HpTx(1), HpTx(2), and HpTx(3). In terms of biological role, voltage-gated potassium channel that mediates transmembrane potassium transport in excitable membranes, primarily in the brain, but also in rodent heart. Mediates the major part of the dendritic A-type current I(SA) in brain neurons. This current is activated at membrane potentials that are below the threshold for action potentials. It regulates neuronal excitability, prolongs the latency before the first spike in a series of action potentials, regulates the frequency of repetitive action potential firing, shortens the duration of action potentials and regulates the back-propagation of action potentials from the neuronal cell body to the dendrites. Contributes to the regulation of the circadian rhythm of action potential firing in suprachiasmatic nucleus neurons, which regulates the circadian rhythm of locomotor activity. Functions downstream of the metabotropic glutamate receptor GRM5 and plays a role in neuronal excitability and in nociception mediated by activation of GRM5. Mediates the transient outward current I(to) in rodent heart left ventricle apex cells, but not in human heart, where this current is mediated by another family member. Forms tetrameric potassium-selective channels through which potassium ions pass in accordance with their electrochemical gradient. The channel alternates between opened and closed conformations in response to the voltage difference across the membrane. Can form functional homotetrameric channels and heterotetrameric channels that contain variable proportions of KCND2 and KCND3; channel properties depend on the type of pore-forming alpha subunits that are part of the channel. In vivo, membranes probably contain a mixture of heteromeric potassium channel complexes. Interaction with specific isoforms of the regulatory subunits KCNIP1, KCNIP2, KCNIP3 or KCNIP4 strongly increases expression at the cell surface and thereby increases channel activity; it modulates the kinetics of channel activation and inactivation, shifts the threshold for channel activation to more negative voltage values, shifts the threshold for inactivation to less negative voltages and accelerates recovery after inactivation. Likewise, interaction with DPP6 or DPP10 promotes expression at the cell membrane and regulates both channel characteristics and activity. Upon depolarization, the channel goes from a resting closed state (C state) to an activated but non-conducting state (C* state), from there, the channel may either inactivate (I state) or open (O state). The polypeptide is A-type voltage-gated potassium channel KCND2 (Rattus norvegicus (Rat)).